The sequence spans 333 residues: Phenylalanine--tRNA ligase alpha subunit (333 aa).

Position 258 (E258) interacts with Mg(2+).

The protein belongs to the class-II aminoacyl-tRNA synthetase family. Phe-tRNA synthetase alpha subunit type 1 subfamily. As to quaternary structure, tetramer of two alpha and two beta subunits. The cofactor is Mg(2+).

It localises to the cytoplasm. The enzyme catalyses tRNA(Phe) + L-phenylalanine + ATP = L-phenylalanyl-tRNA(Phe) + AMP + diphosphate + H(+). The chain is Phenylalanine--tRNA ligase alpha subunit from Wigglesworthia glossinidia brevipalpis.